A 132-amino-acid chain; its full sequence is L-ectoine synthase (132 aa).

It belongs to the ectoine synthase family.

The enzyme catalyses (2S)-4-acetamido-2-aminobutanoate = L-ectoine + H2O. The protein operates within amine and polyamine biosynthesis; ectoine biosynthesis; L-ectoine from L-aspartate 4-semialdehyde: step 3/3. Catalyzes the circularization of gamma-N-acetyl-alpha,gamma-diaminobutyric acid (ADABA) to ectoine (1,4,5,6-tetrahydro-2-methyl-4-pyrimidine carboxylic acid), which is an excellent osmoprotectant. In Hahella chejuensis (strain KCTC 2396), this protein is L-ectoine synthase.